The chain runs to 397 residues: Cysteine desulfurase (397 aa).

Pyridoxal 5'-phosphate-binding positions include Asn-148, Gln-176, and 196–198 (SAH). At Lys-199 the chain carries N6-(pyridoxal phosphate)lysine. A pyridoxal 5'-phosphate-binding site is contributed by Thr-234. The active-site Cysteine persulfide intermediate is Cys-321. Position 321 (Cys-321) interacts with [2Fe-2S] cluster.

This sequence belongs to the class-V pyridoxal-phosphate-dependent aminotransferase family. NifS/IscS subfamily. As to quaternary structure, homodimer. It depends on pyridoxal 5'-phosphate as a cofactor.

It catalyses the reaction (sulfur carrier)-H + L-cysteine = (sulfur carrier)-SH + L-alanine. Functionally, catalyzes the removal of elemental sulfur atoms from cysteine to produce alanine. Seems to participate in the biosynthesis of the nitrogenase metalloclusters by providing the inorganic sulfur required for the Fe-S core formation. The sequence is that of Cysteine desulfurase from Klebsiella pneumoniae.